The following is a 281-amino-acid chain: Diaminopimelate epimerase (281 aa).

2 residues coordinate substrate: asparagine 14 and asparagine 65. Residue cysteine 74 is the Proton donor of the active site. Substrate contacts are provided by residues 75-76 (GN), asparagine 165, asparagine 198, and 216-217 (ER). The active-site Proton acceptor is cysteine 225. 226 to 227 (GT) contributes to the substrate binding site.

It belongs to the diaminopimelate epimerase family. Homodimer.

It is found in the cytoplasm. It carries out the reaction (2S,6S)-2,6-diaminopimelate = meso-2,6-diaminopimelate. It functions in the pathway amino-acid biosynthesis; L-lysine biosynthesis via DAP pathway; DL-2,6-diaminopimelate from LL-2,6-diaminopimelate: step 1/1. Functionally, catalyzes the stereoinversion of LL-2,6-diaminopimelate (L,L-DAP) to meso-diaminopimelate (meso-DAP), a precursor of L-lysine and an essential component of the bacterial peptidoglycan. This is Diaminopimelate epimerase from Leptospira interrogans serogroup Icterohaemorrhagiae serovar copenhageni (strain Fiocruz L1-130).